We begin with the raw amino-acid sequence, 86 residues long: Kappa-theraphotoxin-Cg1a 2 (86 aa).

The first 21 residues, 1 to 21, serve as a signal peptide directing secretion; it reads MKVSVVITLAVLGVMFVWASA. A propeptide spanning residues 22–50 is cleaved from the precursor; that stretch reads AELEERGSDQRDSPAWLKSMERIFQSEER. Intrachain disulfides connect cysteine 52–cysteine 66, cysteine 59–cysteine 71, and cysteine 65–cysteine 78. Residue phenylalanine 84 is modified to Phenylalanine amide.

This sequence belongs to the neurotoxin 10 (Hwtx-1) family. 28 (Jztx-11) subfamily. As to expression, expressed by the venom gland.

It localises to the secreted. Its function is as follows. This toxin acts as a voltage-dependent gating-modifier. It inhibits the sodium conductance (IC(50)=124 nM) and slows the fast inactivation (EC(50)=1180 nM) of Nav1.5/SCN5A. It significantly shifts the activation to more depolarized voltages and decreases the deactivation of Nav1.5 currents upon extreme depolarization, but only slightly affects voltage-dependence of steady-state inactivation. In addition, this toxin causes an approximately five-fold decrease in the rate of recovery from inactivation and an approximately 1.9-fold reduction in the closed-state inactivation rate. This toxin integrates the functions of site 3 toxins (alpha-scorpion toxins) with site 4 toxins (beta-scorpion and spider toxins) by targeting multiple sites on Nav1.5. Also shows inhibition of voltage-gated potassium channels (5 uM completely inhibits Kv2.1/KCNB1, whereas 5 uM moderately inhibits Kv4.2/KCND2 Kv4.1/KCND1 channels). In Chilobrachys guangxiensis (Chinese earth tiger tarantula), this protein is Kappa-theraphotoxin-Cg1a 2.